Reading from the N-terminus, the 369-residue chain is Phosphoribosyl pyrophosphate synthase-associated protein 2 (369 aa).

An N-acetylmethionine modification is found at methionine 1. Phosphoserine occurs at positions 219, 227, and 233.

The protein belongs to the ribose-phosphate pyrophosphokinase family. In terms of assembly, binds to PRPS1 and PRPS2.

Its function is as follows. Seems to play a negative regulatory role in 5-phosphoribose 1-diphosphate synthesis. This chain is Phosphoribosyl pyrophosphate synthase-associated protein 2 (PRPSAP2), found in Bos taurus (Bovine).